We begin with the raw amino-acid sequence, 782 residues long: Cysteine-rich protein 2-binding protein (782 aa).

Residue Ser-4 is modified to Phosphoserine. The tract at residues 13–33 (RHDDEATRTSTSEGLEEGEVE) is disordered. Lys-231 is subject to N6-acetyllysine. The disordered stretch occupies residues 251–282 (PVESAMELKEKRSRTQEAKDIRRAQKEAAGFL). Residues 256–276 (MELKEKRSRTQEAKDIRRAQK) show a composition bias toward basic and acidic residues. Ser-285 is subject to Phosphoserine. Lys-292 carries the N6-acetyllysine modification. Over residues 315–335 (LSSSDRTPLTSPSPSPSLDFS) the composition is skewed to low complexity. Disordered regions lie at residues 315-346 (LSSS…HSAT) and 400-460 (VRKK…EPRY). Composition is skewed to basic and acidic residues over residues 405–426 (RGPE…RMDI) and 446–459 (KPQL…KEPR). Position 416 is a phosphoserine (Ser-416). Residues 638 to 782 (LDYCYVRPNH…KHAFFLRLRR (145 aa)) enclose the N-acetyltransferase domain.

Interacts with the LIM 1 domain of CSRP2. Component of the ADA2A-containing complex (ATAC), composed of CSRP2BP, KAT2A, TADA2L, TADA3L, ZZ3, MBIP, WDR5, YEATS2, CCDC101 and DR1. In the complex, it probably interacts directly with KAT2A, MBIP and WDR5. As to expression, expressed in skeletal muscle, heart, lung, placenta, brain, liver, pancreas and kidney. High expression in skeletal muscle and heart. Lower expression in lung.

Its subcellular location is the nucleus. The protein localises to the cytoplasm. Its function is as follows. Component of the ATAC complex, a complex with histone acetyltransferase activity on histones H3 and H4. May function as a scaffold for the ATAC complex to promote ATAC complex stability. Has also weak histone acetyltransferase activity toward histone H4. Required for the normal progression through G1 and G2/M phases of the cell cycle. This is Cysteine-rich protein 2-binding protein from Homo sapiens (Human).